The sequence spans 570 residues: Methionine--tRNA ligase (570 aa).

The short motif at 11 to 21 (PYVQTVPHLGN) is the 'HIGH' region element. 4 residues coordinate Zn(2+): Cys143, Cys146, Cys156, and Cys159. The 'KMSKS' region signature appears at 333-337 (KFSKS). ATP is bound at residue Lys336.

It belongs to the class-I aminoacyl-tRNA synthetase family. MetG type 1 subfamily. Zn(2+) serves as cofactor.

It localises to the cytoplasm. It carries out the reaction tRNA(Met) + L-methionine + ATP = L-methionyl-tRNA(Met) + AMP + diphosphate. Is required not only for elongation of protein synthesis but also for the initiation of all mRNA translation through initiator tRNA(fMet) aminoacylation. The sequence is that of Methionine--tRNA ligase from Pyrobaculum calidifontis (strain DSM 21063 / JCM 11548 / VA1).